A 98-amino-acid polypeptide reads, in one-letter code: NADH-ubiquinone oxidoreductase chain 4L (98 aa).

3 helical membrane-spanning segments follow: residues 1–21 (MSLTYMNMFMAFTISLLGLLM), 29–49 (SLLCLEGMMLSLFVMMTMTIL), and 61–81 (IILLVFAACEAALGLSLLVMV).

Belongs to the complex I subunit 4L family. In terms of assembly, core subunit of respiratory chain NADH dehydrogenase (Complex I) which is composed of 45 different subunits.

Its subcellular location is the mitochondrion inner membrane. It catalyses the reaction a ubiquinone + NADH + 5 H(+)(in) = a ubiquinol + NAD(+) + 4 H(+)(out). Core subunit of the mitochondrial membrane respiratory chain NADH dehydrogenase (Complex I) which catalyzes electron transfer from NADH through the respiratory chain, using ubiquinone as an electron acceptor. Part of the enzyme membrane arm which is embedded in the lipid bilayer and involved in proton translocation. The chain is NADH-ubiquinone oxidoreductase chain 4L (MT-ND4L) from Vampyressa brocki (Brock's yellow-eared bat).